The following is a 393-amino-acid chain: Probable acetyl-CoA acetyltransferase (393 aa).

Cys88 (acyl-thioester intermediate) is an active-site residue. Residues His349 and Cys379 each act as proton acceptor in the active site.

The protein belongs to the thiolase-like superfamily. Thiolase family.

It catalyses the reaction 2 acetyl-CoA = acetoacetyl-CoA + CoA. The polypeptide is Probable acetyl-CoA acetyltransferase (fadA4) (Mycobacterium leprae (strain TN)).